Here is a 294-residue protein sequence, read N- to C-terminus: Elongation factor Ts (294 aa).

The tract at residues T81–V84 is involved in Mg(2+) ion dislocation from EF-Tu.

Belongs to the EF-Ts family.

It is found in the cytoplasm. Associates with the EF-Tu.GDP complex and induces the exchange of GDP to GTP. It remains bound to the aminoacyl-tRNA.EF-Tu.GTP complex up to the GTP hydrolysis stage on the ribosome. This Lawsonia intracellularis (strain PHE/MN1-00) protein is Elongation factor Ts.